A 136-amino-acid chain; its full sequence is Putative pre-16S rRNA nuclease (136 aa).

The protein belongs to the YqgF nuclease family.

It localises to the cytoplasm. Functionally, could be a nuclease involved in processing of the 5'-end of pre-16S rRNA. This is Putative pre-16S rRNA nuclease from Francisella tularensis subsp. tularensis (strain FSC 198).